The following is a 510-amino-acid chain: ATP synthase subunit alpha (510 aa).

169 to 176 (GDRQTGKT) is an ATP binding site.

It belongs to the ATPase alpha/beta chains family. In terms of assembly, F-type ATPases have 2 components, CF(1) - the catalytic core - and CF(0) - the membrane proton channel. CF(1) has five subunits: alpha(3), beta(3), gamma(1), delta(1), epsilon(1). CF(0) has three main subunits: a(1), b(2) and c(9-12). The alpha and beta chains form an alternating ring which encloses part of the gamma chain. CF(1) is attached to CF(0) by a central stalk formed by the gamma and epsilon chains, while a peripheral stalk is formed by the delta and b chains.

The protein localises to the cell inner membrane. It carries out the reaction ATP + H2O + 4 H(+)(in) = ADP + phosphate + 5 H(+)(out). Functionally, produces ATP from ADP in the presence of a proton gradient across the membrane. The alpha chain is a regulatory subunit. The polypeptide is ATP synthase subunit alpha (Anaeromyxobacter dehalogenans (strain 2CP-C)).